Reading from the N-terminus, the 369-residue chain is Tetraacyldisaccharide 4'-kinase (369 aa).

ATP is bound at residue 68 to 75 (VVGGTGKT).

The protein belongs to the LpxK family.

The enzyme catalyses a lipid A disaccharide + ATP = a lipid IVA + ADP + H(+). The protein operates within glycolipid biosynthesis; lipid IV(A) biosynthesis; lipid IV(A) from (3R)-3-hydroxytetradecanoyl-[acyl-carrier-protein] and UDP-N-acetyl-alpha-D-glucosamine: step 6/6. Functionally, transfers the gamma-phosphate of ATP to the 4'-position of a tetraacyldisaccharide 1-phosphate intermediate (termed DS-1-P) to form tetraacyldisaccharide 1,4'-bis-phosphate (lipid IVA). In Chlamydia muridarum (strain MoPn / Nigg), this protein is Tetraacyldisaccharide 4'-kinase.